A 129-amino-acid polypeptide reads, in one-letter code: Small ribosomal subunit protein uS8 (129 aa).

It belongs to the universal ribosomal protein uS8 family. Part of the 30S ribosomal subunit. Contacts proteins S5 and S12.

Its function is as follows. One of the primary rRNA binding proteins, it binds directly to 16S rRNA central domain where it helps coordinate assembly of the platform of the 30S subunit. The sequence is that of Small ribosomal subunit protein uS8 from Bdellovibrio bacteriovorus (strain ATCC 15356 / DSM 50701 / NCIMB 9529 / HD100).